Reading from the N-terminus, the 307-residue chain is Aspartate carbamoyltransferase catalytic subunit (307 aa).

The carbamoyl phosphate site is built by Arg-56 and Thr-57. L-aspartate is bound at residue Lys-84. 3 residues coordinate carbamoyl phosphate: Arg-106, His-136, and Gln-139. Positions 169 and 221 each coordinate L-aspartate. Carbamoyl phosphate is bound by residues Ala-262 and Pro-263.

Belongs to the aspartate/ornithine carbamoyltransferase superfamily. ATCase family. As to quaternary structure, heterododecamer (2C3:3R2) of six catalytic PyrB chains organized as two trimers (C3), and six regulatory PyrI chains organized as three dimers (R2).

The enzyme catalyses carbamoyl phosphate + L-aspartate = N-carbamoyl-L-aspartate + phosphate + H(+). It participates in pyrimidine metabolism; UMP biosynthesis via de novo pathway; (S)-dihydroorotate from bicarbonate: step 2/3. Catalyzes the condensation of carbamoyl phosphate and aspartate to form carbamoyl aspartate and inorganic phosphate, the committed step in the de novo pyrimidine nucleotide biosynthesis pathway. The sequence is that of Aspartate carbamoyltransferase catalytic subunit from Streptococcus pneumoniae serotype 2 (strain D39 / NCTC 7466).